Here is a 44-residue protein sequence, read N- to C-terminus: Photosystem I reaction center subunit IX (44 aa).

A helical transmembrane segment spans residues 7-27; sequence YLSTAPVLATLWFGSLAGLLI.

Belongs to the PsaJ family.

Its subcellular location is the plastid. The protein localises to the chloroplast thylakoid membrane. Functionally, may help in the organization of the PsaE and PsaF subunits. The chain is Photosystem I reaction center subunit IX from Calycanthus floridus var. glaucus (Eastern sweetshrub).